The following is a 1746-amino-acid chain: Tenascin (1746 aa).

A signal peptide spans 1 to 22; that stretch reads MGVVTRLLVGTFLASLALPAQG. Residues 23–185 are involved in hexamer formation; sequence GVLKKVIRHK…CEPGWKGPNC (163 aa). Asn-38 is a glycosylation site (N-linked (GlcNAc...) asparagine). Phosphoserine occurs at positions 65, 70, and 72. A glycan (O-linked (Xyl...) (chondroitin sulfate) serine) is linked at Ser-72. Residues 118-145 are a coiled coil; it reads DVKELLSRLEELENLVSSLREQCTSGAG. Residues Asn-166 and Asn-184 are each glycosylated (N-linked (GlcNAc...) asparagine). Residues 174–186 form the EGF-like 1; incomplete domain; the sequence is CVCEPGWKGPNCS. 14 consecutive EGF-like domains span residues 187 to 217, 218 to 249, 250 to 280, 281 to 311, 312 to 342, 343 to 373, 374 to 404, 405 to 435, 436 to 466, 467 to 497, 498 to 528, 529 to 559, 560 to 589, and 590 to 620; these read EPEC…EDCS, QLAC…DCSR, ETCP…EDCN, EPLC…EDCG, ELIC…EDCG, RLAC…ADCS, ERRC…EDCG, ELRC…EDCS, QLRC…YDCS, EMSC…EDCR, ELRC…PDCA, DLAC…KDCG, QRRC…GLDC, and GQRS…GEDC. 42 cysteine pairs are disulfide-bonded: Cys-190–Cys-200, Cys-194–Cys-205, Cys-207–Cys-216, Cys-221–Cys-231, Cys-225–Cys-236, Cys-238–Cys-247, Cys-252–Cys-263, Cys-256–Cys-268, Cys-270–Cys-279, Cys-284–Cys-294, Cys-288–Cys-299, Cys-301–Cys-310, Cys-315–Cys-325, Cys-319–Cys-330, Cys-332–Cys-341, Cys-346–Cys-356, Cys-350–Cys-361, Cys-363–Cys-372, Cys-377–Cys-387, Cys-381–Cys-392, Cys-394–Cys-403, Cys-408–Cys-418, Cys-412–Cys-423, Cys-425–Cys-434, Cys-439–Cys-449, Cys-443–Cys-454, Cys-456–Cys-465, Cys-470–Cys-480, Cys-474–Cys-485, Cys-487–Cys-496, Cys-501–Cys-511, Cys-505–Cys-516, Cys-518–Cys-527, Cys-532–Cys-542, Cys-536–Cys-547, Cys-549–Cys-558, Cys-563–Cys-573, Cys-567–Cys-578, Cys-580–Cys-589, Cys-594–Cys-604, Cys-598–Cys-609, and Cys-611–Cys-620. Residue Asn-327 is glycosylated (N-linked (GlcNAc...) asparagine). 10 consecutive Fibronectin type-III domains span residues 625 to 717, 718 to 801, 805 to 894, 895 to 988, 989 to 1075, 1076 to 1166, 1167 to 1256, 1257 to 1346, 1347 to 1433, and 1434 to 1522; these read PPKD…TPEG, LKFK…VTTT, APSQ…TGLD, APRN…LDPP, KDFR…AGEP, EIGN…EAEP, EVDN…TAMG, SPKE…ALDG, PSGL…TDLD, and SPRD…IGLL. Asn-788 carries N-linked (GlcNAc...) asparagine glycosylation. Thr-905 is modified (phosphothreonine). Residues Asn-1034, Asn-1079, and Asn-1121 are each glycosylated (N-linked (GlcNAc...) asparagine). Asn-1354 carries N-linked (GlcNAc...) asparagine glycosylation. The Fibrinogen C-terminal domain occupies 1520–1735; sequence GLLYPFPRDC…FAEMKLRPSN (216 aa).

It belongs to the tenascin family. As to quaternary structure, homohexamer; disulfide-linked. A homotrimer may be formed in the triple coiled-coil region and may be stabilized by disulfide rings at both ends. Two of such half-hexabrachions may be disulfide linked within the central globule. Interacts with CSPG4. Interacts (via the 3rd fibronectin type-III domain) with integrin ITGA9:ITGB1. In terms of tissue distribution, submaxillary glands and brain.

It localises to the secreted. The protein localises to the extracellular space. Its subcellular location is the extracellular matrix. Functionally, extracellular matrix protein implicated in guidance of migrating neurons as well as axons during development, synaptic plasticity as well as neuronal regeneration. Promotes neurite outgrowth from cortical neurons grown on a monolayer of astrocytes. Ligand for integrins alpha-8/beta-1, alpha-9/beta-1, alpha-V/beta-3 and alpha-V/beta-6. In tumors, stimulates angiogenesis by elongation, migration and sprouting of endothelial cells. This is Tenascin (TNC) from Sus scrofa (Pig).